We begin with the raw amino-acid sequence, 284 residues long: tRNA uridine(34) hydroxylase (284 aa).

The region spanning 132–226 (AGRPVVMLDT…YFEEVGGAHY (95 aa)) is the Rhodanese domain. Catalysis depends on Cys-186, which acts as the Cysteine persulfide intermediate.

The protein belongs to the TrhO family.

The enzyme catalyses uridine(34) in tRNA + AH2 + O2 = 5-hydroxyuridine(34) in tRNA + A + H2O. In terms of biological role, catalyzes oxygen-dependent 5-hydroxyuridine (ho5U) modification at position 34 in tRNAs. This is tRNA uridine(34) hydroxylase from Burkholderia orbicola (strain MC0-3).